Reading from the N-terminus, the 149-residue chain is NADH-quinone oxidoreductase subunit A (149 aa).

The next 3 membrane-spanning stretches (helical) occupy residues 16 to 36 (FAVF…GAFF), 68 to 88 (FYLV…LYAW), and 98 to 118 (LGFI…FYLV).

This sequence belongs to the complex I subunit 3 family. NDH-1 is composed of 13 different subunits. Subunits NuoA, H, J, K, L, M, N constitute the membrane sector of the complex.

The protein localises to the cell inner membrane. It catalyses the reaction a quinone + NADH + 5 H(+)(in) = a quinol + NAD(+) + 4 H(+)(out). Its function is as follows. NDH-1 shuttles electrons from NADH, via FMN and iron-sulfur (Fe-S) centers, to quinones in the respiratory chain. The immediate electron acceptor for the enzyme in this species is believed to be ubiquinone. Couples the redox reaction to proton translocation (for every two electrons transferred, four hydrogen ions are translocated across the cytoplasmic membrane), and thus conserves the redox energy in a proton gradient. This Photorhabdus laumondii subsp. laumondii (strain DSM 15139 / CIP 105565 / TT01) (Photorhabdus luminescens subsp. laumondii) protein is NADH-quinone oxidoreductase subunit A.